The sequence spans 163 residues: Endoribonuclease YbeY (163 aa).

Residues His-119, His-123, and His-129 each contribute to the Zn(2+) site.

The protein belongs to the endoribonuclease YbeY family. Requires Zn(2+) as cofactor.

The protein resides in the cytoplasm. In terms of biological role, single strand-specific metallo-endoribonuclease involved in late-stage 70S ribosome quality control and in maturation of the 3' terminus of the 16S rRNA. This chain is Endoribonuclease YbeY, found in Actinobacillus pleuropneumoniae serotype 5b (strain L20).